The sequence spans 248 residues: Granzyme B (248 aa).

The first 18 residues, 1–18 (MKLLLLLLSFSLAPKTEA), serve as a signal peptide directing secretion. The propeptide at 19–20 (GE) is activation peptide. The 226-residue stretch at 21–246 (IIGGHEAKPH…FLSWIKKTMK (226 aa)) folds into the Peptidase S1 domain. A disulfide bridge connects residues C50 and C66. Active-site charge relay system residues include H65 and D109. Cystine bridges form between C143-C210 and C174-C189. The active-site Charge relay system is S204.

The protein belongs to the peptidase S1 family. Granzyme subfamily.

Its subcellular location is the secreted. The protein resides in the cytolytic granule. The enzyme catalyses Preferential cleavage: -Asp-|-Xaa- &gt;&gt; -Asn-|-Xaa- &gt; -Met-|-Xaa-, -Ser-|-Xaa-.. Inactivated by the serine protease inhibitor diisopropylfluorophosphate. Functionally, abundant protease in the cytosolic granules of cytotoxic T-cells and NK-cells which activates caspase-independent pyroptosis when delivered into the target cell through the immunological synapse. It cleaves after Asp. Once delivered into the target cell, acts by catalyzing cleavage of gasdermin-E (GSDME), releasing the pore-forming moiety of GSDME, thereby triggering pyroptosis and target cell death. Seems to be linked to an activation cascade of caspases (aspartate-specific cysteine proteases) responsible for apoptosis execution. Cleaves caspase-3 and -9 (CASP3 and CASP9, respectively) to give rise to active enzymes mediating apoptosis. Cleaves and activates CASP7 in response to bacterial infection, promoting plasma membrane repair. The protein is Granzyme B (Gzmb) of Rattus norvegicus (Rat).